The primary structure comprises 83 residues: Beta/kappa-theraphotoxin-Cg2a (83 aa).

Positions 1–21 (MKASVFAVILGLVVLCACSFA) are cleaved as a signal peptide. A propeptide spanning residues 22 to 53 (EDEQDQFVSPNELLKSMFVESRHEFTPEVEGR) is cleaved from the precursor. Disulfide bonds link C55-C69, C62-C74, and C68-C78. I82 carries the post-translational modification Isoleucine amide.

Belongs to the neurotoxin 30 (phrixotoxin) family. As to expression, expressed by the venom gland.

It is found in the secreted. Functionally, this gating-modifier toxin shows an important inhibitory activity on sodium channels. It is very active on Nav1.7/SCN9A (IC(50)~0.6 nM), and also shows activity on Nav1.3/SCN3A (IC(50)=292 nM), Nav1.4/SCN4A (IC(50)=2.2-159 nM), and Nav1.5/SCN5A (IC(50)=2.3-2.9 uM). It has also been shown to inhibit tetrodotoxin (TTX)-resistant (IC(50)=27.6 nM) and TTX-sensitive (IC(50)=30.2 nM) sodium channels in rat dorsal root ganglion neurons. Lower inhibitory activity has also been shown on potassium channels: Kv4.2/KCND2 (IC(50)=604.2 nM), Kv4.3/KCND3 (IC(50)=425.1 nM), and Kv2.1/KCNB1 (IC(50)=14.3 uM). It binds to phospholipid membranes. Like its analog AM-8145, it may act by interacting only with the second voltage-sensor domain of Nav1.7/SCN9A. The polypeptide is Beta/kappa-theraphotoxin-Cg2a (Chilobrachys guangxiensis (Chinese earth tiger tarantula)).